The primary structure comprises 227 residues: ATP-dependent dethiobiotin synthetase BioD (227 aa).

13 to 18 contributes to the ATP binding site; sequence NIGKTI. T17 serves as a coordination point for Mg(2+). The active site involves K38. S42 contributes to the substrate binding site. ATP-binding positions include D55, 117-120, 177-178, 206-208, and N213; these read EGFG, NH, and PFI. Residues D55 and E117 each coordinate Mg(2+).

Belongs to the dethiobiotin synthetase family. Homodimer. The cofactor is Mg(2+).

Its subcellular location is the cytoplasm. It catalyses the reaction (7R,8S)-7,8-diammoniononanoate + CO2 + ATP = (4R,5S)-dethiobiotin + ADP + phosphate + 3 H(+). Its pathway is cofactor biosynthesis; biotin biosynthesis; biotin from 7,8-diaminononanoate: step 1/2. Its function is as follows. Catalyzes a mechanistically unusual reaction, the ATP-dependent insertion of CO2 between the N7 and N8 nitrogen atoms of 7,8-diaminopelargonic acid (DAPA, also called 7,8-diammoniononanoate) to form a ureido ring. In Wigglesworthia glossinidia brevipalpis, this protein is ATP-dependent dethiobiotin synthetase BioD.